Reading from the N-terminus, the 274-residue chain is Triosephosphate isomerase (274 aa).

13-15 (NWK) provides a ligand contact to substrate. The Electrophile role is filled by H98. E170 serves as the catalytic Proton acceptor. Substrate contacts are provided by G176 and S216.

It belongs to the triosephosphate isomerase family. In terms of assembly, homodimer.

Its subcellular location is the cytoplasm. It carries out the reaction D-glyceraldehyde 3-phosphate = dihydroxyacetone phosphate. The protein operates within carbohydrate biosynthesis; gluconeogenesis. It participates in carbohydrate degradation; glycolysis; D-glyceraldehyde 3-phosphate from glycerone phosphate: step 1/1. Its function is as follows. Involved in the gluconeogenesis. Catalyzes stereospecifically the conversion of dihydroxyacetone phosphate (DHAP) to D-glyceraldehyde-3-phosphate (G3P). The chain is Triosephosphate isomerase from Onion yellows phytoplasma (strain OY-M).